The following is a 102-amino-acid chain: uncharacterized protein (102 aa).

[3Fe-4S] cluster-binding residues include C10, C16, and C55. The segment at 66 to 102 (DAGDDERASADPARSPAEAERHAAKDQRIPGGHDGTV) is disordered. Residues 82–93 (AEAERHAAKDQR) show a composition bias toward basic and acidic residues.

It depends on [3Fe-4S] cluster as a cofactor.

In terms of biological role, electron transport protein for the cytochrome systems. This is an uncharacterized protein from Sinorhizobium fredii (strain NBRC 101917 / NGR234).